A 91-amino-acid polypeptide reads, in one-letter code: RING finger protein Z (91 aa).

Gly-2 carries N-myristoyl glycine; by host lipidation. Residues Cys-35–Cys-71 form an RING-type; atypical zinc finger. A PTAP/PSAP motif motif is present at residues Pro-85 to Pro-88.

It belongs to the arenaviridae Z protein family. Interacts with protein NP; this interaction probably directs the encapsidated genome to budding sites. Interacts (via RING domain) with polymerase L; this interaction inhibits viral transcription and replication, Z partially blocks the product exit tunnel for the releasing nascent RNA product. Interacts with the glycoprotein complex; this interaction plays a role in virion budding. Interacts with host eIF4E; this interaction results in eIF4E reduced affinity for its substrate, the 5'-m7 G cap structure. Interacts (via late-budding domain) with host TSG101; this interaction is essential for budding and release of viral particles. Interacts with host RPLP0; this interaction may serve to load ribosome-like particles inside the virion. Interacts with host PML; this interaction induces PML bodies redistribution in the cytoplasm upon viral infection. Myristoylation is required for the role of RING finger protein Z in assembly and budding.

It is found in the virion. Its subcellular location is the host cytoplasm. The protein resides in the host perinuclear region. It localises to the host cell membrane. In terms of biological role, plays a crucial role in virion assembly and budding. Expressed late in the virus life cycle, it acts as an inhibitor of viral transcription and RNA synthesis by interacting with the viral polymerase L. Presumably recruits the NP encapsidated genome to cellular membranes at budding sites via direct interaction with NP. Plays critical roles in the final steps of viral release by interacting with host TSG101, a member of the vacuolar protein-sorting pathway and using other cellular host proteins involved in vesicle formation pathway. The budding of the virus progeny occurs after association of protein Z with the viral glycoprotein complex SSP-GP1-GP2 at the cell periphery, step that requires myristoylation of protein Z. Also selectively represses protein production by associating with host eIF4E. In cell-based minigenome assay, has an inhibitory effect on the ribonucleoprotein machinery (vRNP), which is responsible for the replication and transcription of the viral genome. This Latino mammarenavirus (isolate Rat/Bolivia/MARU 1924/1965) (LATV) protein is RING finger protein Z.